The following is a 90-amino-acid chain: uncharacterized protein (90 aa).

The protein resides in the cytoplasm. This is an uncharacterized protein from Saccharomyces cerevisiae (strain ATCC 204508 / S288c) (Baker's yeast).